The sequence spans 296 residues: Transposase for insertion sequence element IS629 (296 aa).

The Integrase catalytic domain occupies 125–285 (VAERPDQLWV…TPPAEAEKAY (161 aa)).

Functionally, involved in the transposition of the insertion sequence. This Shigella sonnei protein is Transposase for insertion sequence element IS629.